The sequence spans 202 residues: CASP-like protein 2U7 (202 aa).

The Cytoplasmic portion of the chain corresponds to 1–10; sequence MLELYEKRRA. The chain crosses the membrane as a helical span at residues 11-31; the sequence is LLLLRLAAMFLSLAALLITVL. Over 32–64 the chain is Extracellular; sequence NREDGFFSINVFGSPQPILTKATADFTLVKGLK. A helical transmembrane segment spans residues 65–85; sequence FFAGAMGIVAGYSFLQLAIAM. The Cytoplasmic segment spans residues 86 to 101; that stretch reads ASMFSGAPSILGGKRM. The chain crosses the membrane as a helical span at residues 102-122; the sequence is AWLCFVGDMTASHLCAAAAAV. Residues 123–148 are Extracellular-facing; sequence SAQLAYLGKRGAPMWSAVCTYFSHYC. A helical transmembrane segment spans residues 149–169; the sequence is LVFGLAVIFAFLATLAALLVA. At 170–202 the chain is on the cytoplasmic side; it reads SISSYHLFRLHGILQQQQQQRRQLQQEHVQDKP.

This sequence belongs to the Casparian strip membrane proteins (CASP) family. Homodimer and heterodimers.

It localises to the cell membrane. This chain is CASP-like protein 2U7, found in Selaginella moellendorffii (Spikemoss).